A 362-amino-acid chain; its full sequence is Heat-inducible transcription repressor HrcA (362 aa).

The protein belongs to the HrcA family.

Negative regulator of class I heat shock genes (grpE-dnaK-dnaJ and groELS operons). Prevents heat-shock induction of these operons. This chain is Heat-inducible transcription repressor HrcA, found in Bradyrhizobium sp. (strain ORS 278).